The primary structure comprises 479 residues: Glutamyl-tRNA(Gln) amidotransferase subunit A (479 aa).

Residues K74 and S149 each act as charge relay system in the active site. The Acyl-ester intermediate role is filled by S173.

Belongs to the amidase family. GatA subfamily. Heterotrimer of A, B and C subunits.

It carries out the reaction L-glutamyl-tRNA(Gln) + L-glutamine + ATP + H2O = L-glutaminyl-tRNA(Gln) + L-glutamate + ADP + phosphate + H(+). Its function is as follows. Allows the formation of correctly charged Gln-tRNA(Gln) through the transamidation of misacylated Glu-tRNA(Gln) in organisms which lack glutaminyl-tRNA synthetase. The reaction takes place in the presence of glutamine and ATP through an activated gamma-phospho-Glu-tRNA(Gln). The chain is Glutamyl-tRNA(Gln) amidotransferase subunit A from Cenarchaeum symbiosum (strain A).